The following is a 476-amino-acid chain: Fatty acid hydroperoxide lyase, chloroplastic (476 aa).

The chain crosses the membrane as a helical span at residues 280–300 (LLFILGFNAFGGFSIFLPTLL). Residue Cys438 participates in heme binding.

The protein belongs to the cytochrome P450 family. Heme is required as a cofactor. Highly expressed in developing flowers and in young leaves. Detected in stems and immature green fruits, but not in mature green and red fruits.

It is found in the plastid. It localises to the chloroplast outer membrane. Its activity is regulated as follows. Reversibly inhibited by nordihydroguaiaretic acid (NDGA) and irreversibly by salicylic acid. In terms of biological role, cytochrome P450 of the CYP74B subfamily involved in the biosynthesis of traumatin and C6 aldehydes. Metabolizes 13- but not 9-hydroperoxides of linoleic and linolenic acids. Can use 15S-hydroperoxy-11(Z),13(E),17(Z)-eicosatrienoic acid (15-HPET) and 13S-hydroperoxy-9(Z),11(E),15(Z)-octadecatrienoic acid (13-HPOT) as substrates, but only 5% activity with 13S-hydroperoxy-9(Z),11(E)-octadecadienoic acid (13-HPOD). Produces n-hexanal and 12-oxo-9(Z)-dodecanoic acid from 13-HPOD. The protein is Fatty acid hydroperoxide lyase, chloroplastic of Solanum lycopersicum (Tomato).